The following is a 169-amino-acid chain: Large ribosomal subunit protein uL15 (169 aa).

The tract at residues 20–56 (GRGIGSGKGKTGGRGVKGQKARSGVSIKGFEGGQMPL) is disordered. Positions 21–35 (RGIGSGKGKTGGRGV) are enriched in gly residues.

Belongs to the universal ribosomal protein uL15 family. In terms of assembly, part of the 50S ribosomal subunit.

Binds to the 23S rRNA. This Methylorubrum extorquens (strain CM4 / NCIMB 13688) (Methylobacterium extorquens) protein is Large ribosomal subunit protein uL15.